The sequence spans 195 residues: Phosphoheptose isomerase (195 aa).

Residues 36-195 form the SIS domain; that stretch reads LVDSLKGDGI…IIEKELFGLD (160 aa). 51–53 provides a ligand contact to substrate; that stretch reads NGG. Positions 60 and 64 each coordinate Zn(2+). Residues E64, 95–96, 121–123, S126, and Q173 contribute to the substrate site; these read ND and TTS. Residues Q173 and H181 each coordinate Zn(2+).

The protein belongs to the SIS family. GmhA subfamily. Zn(2+) is required as a cofactor.

Its subcellular location is the cytoplasm. The catalysed reaction is 2 D-sedoheptulose 7-phosphate = D-glycero-alpha-D-manno-heptose 7-phosphate + D-glycero-beta-D-manno-heptose 7-phosphate. It participates in carbohydrate biosynthesis; D-glycero-D-manno-heptose 7-phosphate biosynthesis; D-glycero-alpha-D-manno-heptose 7-phosphate and D-glycero-beta-D-manno-heptose 7-phosphate from sedoheptulose 7-phosphate: step 1/1. In terms of biological role, catalyzes the isomerization of sedoheptulose 7-phosphate in D-glycero-D-manno-heptose 7-phosphate. This chain is Phosphoheptose isomerase, found in Leptospira biflexa serovar Patoc (strain Patoc 1 / Ames).